A 249-amino-acid chain; its full sequence is Transmembrane protein 150C (249 aa).

Over methionine 1–tryptophan 9 the chain is Cytoplasmic. The chain crosses the membrane as a helical span at residues methionine 10 to isoleucine 30. At alanine 31–alanine 64 the chain is on the extracellular side. The helical transmembrane segment at serine 65–leucine 85 threads the bilayer. Residues arginine 86–proline 97 lie on the Cytoplasmic side of the membrane. The chain crosses the membrane as a helical span at residues tryptophan 98–glycine 118. Residues asparagine 119 to asparagine 130 are Extracellular-facing. Residues valine 131 to threonine 151 traverse the membrane as a helical segment. The Cytoplasmic portion of the chain corresponds to leucine 152–valine 168. A helical transmembrane segment spans residues isoleucine 169–isoleucine 189. Residues histidine 190–tyrosine 192 lie on the Extracellular side of the membrane. The helical transmembrane segment at alanine 193 to valine 213 threads the bilayer. Over glutamate 214–valine 249 the chain is Cytoplasmic.

The protein belongs to the DRAM/TMEM150 family.

The protein localises to the cell membrane. The protein resides in the lysosome membrane. The enzyme catalyses Ca(2+)(in) = Ca(2+)(out). The catalysed reaction is Na(+)(in) = Na(+)(out). It carries out the reaction K(+)(in) = K(+)(out). It catalyses the reaction Mg(2+)(in) = Mg(2+)(out). Nonselective cationic channel with high permeability to Ca(2+). Component of a mechanosensitive cation channel, confers mechanically activated (MA) currents with slow inactivation kinetics. May contribute to proprioception. This is Transmembrane protein 150C from Homo sapiens (Human).